Reading from the N-terminus, the 335-residue chain is Methionine import ATP-binding protein MetN (335 aa).

The ABC transporter domain maps to 2–241 (IQFQRLHKSY…PKHATTRRFV (240 aa)). 38–45 (GHSGAGKS) contacts ATP.

Belongs to the ABC transporter superfamily. Methionine importer (TC 3.A.1.24) family. As to quaternary structure, the complex is composed of two ATP-binding proteins (MetN), two transmembrane proteins (MetI) and a solute-binding protein (MetQ).

The protein localises to the cell inner membrane. The enzyme catalyses L-methionine(out) + ATP + H2O = L-methionine(in) + ADP + phosphate + H(+). The catalysed reaction is D-methionine(out) + ATP + H2O = D-methionine(in) + ADP + phosphate + H(+). In terms of biological role, part of the ABC transporter complex MetNIQ involved in methionine import. Responsible for energy coupling to the transport system. The chain is Methionine import ATP-binding protein MetN from Xanthomonas euvesicatoria pv. vesicatoria (strain 85-10) (Xanthomonas campestris pv. vesicatoria).